We begin with the raw amino-acid sequence, 78 residues long: Large ribosomal subunit protein bL28 (78 aa).

It belongs to the bacterial ribosomal protein bL28 family.

This chain is Large ribosomal subunit protein bL28, found in Prochlorococcus marinus (strain MIT 9301).